Consider the following 339-residue polypeptide: Photosystem II assembly lipoprotein Ycf48 (339 aa).

Positions 1-23 are cleaved as a signal peptide; the sequence is MNRLIKFSFNLILIFVLGLGLSG. A lipid anchor (N-palmitoyl cysteine) is attached at cysteine 24. A lipid anchor (S-diacylglycerol cysteine) is attached at cysteine 24.

The protein belongs to the Ycf48 family. Part of early PSII assembly complexes which includes D1 (psbA) and PsbI; not found in mature PSII. Binds to the lumenal side of PSII complexes. Interacts with YidC.

It is found in the cellular thylakoid membrane. Functionally, a factor required for optimal assembly of photosystem II (PSII), acting in the early stages of PSII assembly. Also plays a role in replacement of photodamaged D1 (psbA). Assists YidC in synthesis of chlorophyll-binding proteins. The sequence is that of Photosystem II assembly lipoprotein Ycf48 from Prochlorococcus marinus (strain SARG / CCMP1375 / SS120).